Here is a 979-residue protein sequence, read N- to C-terminus: Zinc finger BED domain-containing protein 6 (979 aa).

A required for nucleolar localization region spans residues 1–89 (MSVCTLSVPV…ILAKKFSKDL (89 aa)). A BED-type 1 zinc finger spans residues 130 to 187 (AKTSIVWHFFHVDPQYTWRAICNLCEKSVSRGKPGSHLGTSTLQRHLQARHSPHWTRA). The Zn(2+) site is built by Cys151, Cys154, His175, and His180. A disordered region spans residues 207-232 (PSSGSNGSFEYIPTDPLDDNRMGKKH). The BED-type 2 zinc-finger motif lies at 264–321 (AKTSAVWNFFYTDPQHISRAVCNICKRSVSRGRPGSHLGTSTLQRHLQATHPIHWAVA). Residues Cys285, Cys288, His309, and His314 each coordinate Zn(2+). The disordered stretch occupies residues 333–383 (DEAETERSDLLSDTLHGEKSTGSQDLTAEDLSDSDSDEPMLEVENRSESPI). Over residues 337 to 351 (TERSDLLSDTLHGEK) the composition is skewed to basic and acidic residues. Residues 359–373 (TAEDLSDSDSDEPML) show a composition bias toward acidic residues. Position 381 is a phosphoserine (Ser381). The interval 866 to 948 (VVDEYFKEKY…EQLMFLKMNL (83 aa)) is HATC (Hobo-Ac-Tam3) domain.

As to expression, expressed in pancreatic islet cells (at protein level).

The protein localises to the nucleus. It localises to the nucleolus. The protein resides in the cytoplasm. Transcriptional repressor which binds to the consensus sequence 5'-GCTCGC-3', transcription regulation may be tissue-specific. Regulates the expression of target genes such as: IGF2, PGAP6/TMEM8, ENHO, and PIANP. Acts as a transcriptional repressor of growth factor IGF2, thereby negatively regulating postnatal growth of muscles and internal organs, especially in females. Negatively regulates myoblast differentiation and myoblast mitochondrial activity via its regulation of IGF2 transcription. Negatively regulates the cell cycle of myoblasts, potentially via transcriptional regulation of the E2F family of transcription factors such as: E2F1 and E2F2. Positively regulates the cell cycle and survival of pancreatic beta cells. Binds to the CDH2 gene and may directly repress CDH2 transcription. Probably by controlling CDH2 expression, regulates pancreatic beta cell adhesion, and formation of cell-to-cell junctions between pancreatic beta cells and neural crest stem cells. May also play a role in embryonic beta cell differentiation. May play a role in insulin sensitivity and glucose clearance. This chain is Zinc finger BED domain-containing protein 6, found in Homo sapiens (Human).